The primary structure comprises 771 residues: Protein translocase subunit SecA 2 (771 aa).

ATP-binding positions include glutamine 91, 109–113, and aspartate 496; that span reads GEGKT.

Belongs to the SecA family. In terms of assembly, monomer and homodimer. Part of the essential Sec protein translocation apparatus which comprises SecA, SecYEG and auxiliary proteins SecDF. Other proteins may also be involved.

The protein localises to the cell membrane. It localises to the cytoplasm. It carries out the reaction ATP + H2O + cellular proteinSide 1 = ADP + phosphate + cellular proteinSide 2.. In terms of biological role, part of the Sec protein translocase complex. Interacts with the SecYEG preprotein conducting channel. Has a central role in coupling the hydrolysis of ATP to the transfer of proteins into and across the cell membrane, serving as an ATP-driven molecular motor driving the stepwise translocation of polypeptide chains across the membrane. This chain is Protein translocase subunit SecA 2, found in Corynebacterium jeikeium (strain K411).